A 63-amino-acid polypeptide reads, in one-letter code: Protein DsrB (63 aa).

It belongs to the DsrB family.

In Yersinia pseudotuberculosis serotype O:1b (strain IP 31758), this protein is Protein DsrB.